Here is a 189-residue protein sequence, read N- to C-terminus: Elongation factor P (189 aa).

This sequence belongs to the elongation factor P family.

The protein resides in the cytoplasm. It participates in protein biosynthesis; polypeptide chain elongation. Functionally, involved in peptide bond synthesis. Stimulates efficient translation and peptide-bond synthesis on native or reconstituted 70S ribosomes in vitro. Probably functions indirectly by altering the affinity of the ribosome for aminoacyl-tRNA, thus increasing their reactivity as acceptors for peptidyl transferase. The sequence is that of Elongation factor P from Campylobacter jejuni subsp. doylei (strain ATCC BAA-1458 / RM4099 / 269.97).